We begin with the raw amino-acid sequence, 154 residues long: Myoglobin (154 aa).

Positions 2–148 (GLSEAEWQLV…FRKDIAAKYK (147 aa)) constitute a Globin domain. S4 carries the post-translational modification Phosphoserine. Nitrite is bound at residue H65. H65 contributes to the O2 binding site. T68 is modified (phosphothreonine). Residue H94 participates in heme b binding.

Belongs to the globin family. As to quaternary structure, monomeric.

The protein localises to the cytoplasm. It localises to the sarcoplasm. The catalysed reaction is Fe(III)-heme b-[protein] + nitric oxide + H2O = Fe(II)-heme b-[protein] + nitrite + 2 H(+). It carries out the reaction H2O2 + AH2 = A + 2 H2O. In terms of biological role, monomeric heme protein which primary function is to store oxygen and facilitate its diffusion within muscle tissues. Reversibly binds oxygen through a pentacoordinated heme iron and enables its timely and efficient release as needed during periods of heightened demand. Depending on the oxidative conditions of tissues and cells, and in addition to its ability to bind oxygen, it also has a nitrite reductase activity whereby it regulates the production of bioactive nitric oxide. Under stress conditions, like hypoxia and anoxia, it also protects cells against reactive oxygen species thanks to its pseudoperoxidase activity. The chain is Myoglobin (MB) from Mesoplodon carlhubbsi (Hubb's beaked whale).